The following is a 558-amino-acid chain: Coiled-coil domain-containing protein 63 (558 aa).

Positions 1–26 (MPTKKHRRKDPESPQEPSEKTKEQLV) are disordered. A compositionally biased stretch (basic and acidic residues) spans 9–26 (KDPESPQEPSEKTKEQLV). 2 coiled-coil regions span residues 48 to 289 (NFRS…KAKK) and 339 to 416 (VTEL…VENL). Positions 531–558 (HYATRESRNRDSMPEKGDELKSKKKVTV) are disordered. The span at 533–551 (ATRESRNRDSMPEKGDELK) shows a compositional bias: basic and acidic residues.

Functionally, plays a role in spermiogenesis. Involved in the elongation of flagella and the formation of sperm heads. The polypeptide is Coiled-coil domain-containing protein 63 (Bos taurus (Bovine)).